Consider the following 407-residue polypeptide: Rubber oxygenase (407 aa).

Residues 1-30 (MDGFSRRRMLMTGGALGAVGALGAATRALA) constitute a signal peptide (tat-type signal). His-198 is a binding site for heme.

The protein belongs to the rubber oxygenase Lcp family. Heme b is required as a cofactor. Post-translationally, exported by the Tat system. The position of the signal peptide cleavage has not been experimentally proven.

It localises to the secreted. It participates in biopolymer metabolism. Involved in the initial step of rubber degradation. Catalyzes the oxidative C-C cleavage of poly(cis-1,4-isoprene) in synthetic as well as in natural rubber by the addition of oxygen (O2) to the double bonds, leading to a mixture of oligonucleotide-isoprenoids with terminal keto and aldehyde groups (endo-type cleavage). The cleavage products are of different lengths, ranging from C20 (four isoprene units) to higher oligo-isoprenoids. Is not able to cleave low-molecular-weight substrate analogs with isoprenoid structure such as squalene (1,4-trans-isoprenoid), carotenoids, or alpha-tocopherol. The sequence is that of Rubber oxygenase from Streptomyces sp. (strain K30).